We begin with the raw amino-acid sequence, 192 residues long: BON1-associated protein 1 (192 aa).

One can recognise a C2 domain in the interval 1–119 (MIYFGRSIDN…RYSPEGHLNF (119 aa)).

As to quaternary structure, interacts with BON1 (via VWA domain), BON2 and BON3. In terms of tissue distribution, expressed in roots, leaves, stems and flowers.

Its subcellular location is the membrane. Negative regulator of cell death and defense responses. Exhibits calcium-dependent phospholipid binding properties. This is BON1-associated protein 1 (BAP1) from Arabidopsis thaliana (Mouse-ear cress).